We begin with the raw amino-acid sequence, 468 residues long: Ribosomal protein uS12 methylthiotransferase RimO (468 aa).

Positions 18-129 (PTVAFAHLGC…IVEVLERVEA (112 aa)) constitute an MTTase N-terminal domain. [4Fe-4S] cluster-binding residues include cysteine 27, cysteine 63, cysteine 92, cysteine 167, cysteine 171, and cysteine 174. Residues 153-382 (TTGEAVAYLK…MTLQQPISAA (230 aa)) form the Radical SAM core domain. Positions 385-456 (ARWVGRTVDA…IYDLRAEIVG (72 aa)) constitute a TRAM domain.

This sequence belongs to the methylthiotransferase family. RimO subfamily. Requires [4Fe-4S] cluster as cofactor.

Its subcellular location is the cytoplasm. The enzyme catalyses L-aspartate(89)-[ribosomal protein uS12]-hydrogen + (sulfur carrier)-SH + AH2 + 2 S-adenosyl-L-methionine = 3-methylsulfanyl-L-aspartate(89)-[ribosomal protein uS12]-hydrogen + (sulfur carrier)-H + 5'-deoxyadenosine + L-methionine + A + S-adenosyl-L-homocysteine + 2 H(+). In terms of biological role, catalyzes the methylthiolation of an aspartic acid residue of ribosomal protein uS12. The chain is Ribosomal protein uS12 methylthiotransferase RimO from Synechococcus sp. (strain WH7803).